The chain runs to 743 residues: DEAD-box ATP-dependent RNA helicase 3B, chloroplastic (743 aa).

The N-terminal 37 residues, 1 to 37 (MASLTLPALALALSNPGAVRLRAAAFRCWALRRRGWA), are a transit peptide targeting the chloroplast. The tract at residues 60 to 79 (GSDDEDGEGPYGSDADEGFE) is disordered. Acidic residues predominate over residues 61-79 (SDDEDGEGPYGSDADEGFE). Residues 88 to 116 (LAIARLGLPDELVATLEKRGITHLFPIQR) carry the Q motif motif. In terms of domain architecture, Helicase ATP-binding spans 119 to 295 (LIPALEGRDL…RRYLNNPLTI (177 aa)). 132–139 (AKTGTGKT) contacts ATP. The DEAD box signature appears at 243–246 (DEAD). One can recognise a Helicase C-terminal domain in the interval 324-469 (VLSDLITVYA…ISPPSIEEVL (146 aa)). Positions 606-719 (LTKISKLPAL…RSSSFGGRES (114 aa)) are disordered. Positions 642–653 (GGGASRGRGGWD) are enriched in gly residues. Basic and acidic residues predominate over residues 657–671 (EDRFRRGGRSLRSDN). Low complexity predominate over residues 688–719 (RSSSFGSRSSSYSSRGSPSFGGRSSSFGGRES). The CCHC-type zinc-finger motif lies at 725 to 742 (GACFNCGESGHRATDCPN).

The protein belongs to the DEAD box helicase family. DDX21/DDX50 subfamily.

The protein resides in the plastid. It is found in the chloroplast stroma. It carries out the reaction ATP + H2O = ADP + phosphate + H(+). Functionally, nuclear genome-encoded factor involved in ribosome biogenesis in chloroplasts. Binds specific group II introns in chloroplasts and facilitates their splicing. Is required for rRNA maturation in plastids and may contribute to the assembly of the large (50S) ribosomal subunit. Required for normal development of chloroplasts. This is DEAD-box ATP-dependent RNA helicase 3B, chloroplastic from Zea mays (Maize).